The following is a 568-amino-acid chain: Probable WRKY transcription factor 34 (568 aa).

The segment at residues 172-236 (ACCAPADDGY…YTGDHIHSKP (65 aa)) is a DNA-binding region (WRKY 1). Residues C203, C208, H231, and H233 each contribute to the Zn(2+) site. Disordered stretches follow at residues 230-252 (DHIHSKPPPNRRSGIGSSGTGQD) and 337-360 (KRRKLEAYATETSGSTRASREPRV). Residues 366–431 (SDIDILDDGY…YIGKHTHVVP (66 aa)) constitute a DNA-binding region (WRKY 2). Positions 397, 402, 426, and 428 each coordinate Zn(2+).

The protein belongs to the WRKY group I family.

It localises to the nucleus. In terms of biological role, transcription factor. Interacts specifically with the W box (5'-(T)TGAC[CT]-3'), a frequently occurring elicitor-responsive cis-acting element. The chain is Probable WRKY transcription factor 34 (WRKY34) from Arabidopsis thaliana (Mouse-ear cress).